The chain runs to 207 residues: Guanylate kinase (207 aa).

The 181-residue stretch at 4–184 (GTLYIVSAPS…ALTDLKTIIR (181 aa)) folds into the Guanylate kinase-like domain. 11–18 (APSGAGKS) contributes to the ATP binding site.

It belongs to the guanylate kinase family.

The protein localises to the cytoplasm. The enzyme catalyses GMP + ATP = GDP + ADP. In terms of biological role, essential for recycling GMP and indirectly, cGMP. This is Guanylate kinase from Escherichia coli O6:K15:H31 (strain 536 / UPEC).